Here is a 238-residue protein sequence, read N- to C-terminus: Large ribosomal subunit protein uL2 (238 aa).

The tract at residues 198–238 (HPHGGGLHQSVSRPSTVSRNAPPGRKVGHIASRRTGRRGGA) is disordered. Residues 206–216 (QSVSRPSTVSR) are compositionally biased toward polar residues. A compositionally biased stretch (basic residues) spans 223 to 238 (KVGHIASRRTGRRGGA).

This sequence belongs to the universal ribosomal protein uL2 family. As to quaternary structure, part of the 50S ribosomal subunit. Forms a bridge to the 30S subunit in the 70S ribosome.

Functionally, one of the primary rRNA binding proteins. Required for association of the 30S and 50S subunits to form the 70S ribosome, for tRNA binding and peptide bond formation. It has been suggested to have peptidyltransferase activity; this is somewhat controversial. Makes several contacts with the 16S rRNA in the 70S ribosome. This Sulfolobus acidocaldarius (strain ATCC 33909 / DSM 639 / JCM 8929 / NBRC 15157 / NCIMB 11770) protein is Large ribosomal subunit protein uL2.